A 206-amino-acid polypeptide reads, in one-letter code: LexA repressor (206 aa).

The segment at residues 28–48 (RAEIARRLGFKSANAAEEHLK) is a DNA-binding region (H-T-H motif). Catalysis depends on for autocatalytic cleavage activity residues S123 and K160.

The protein belongs to the peptidase S24 family. Homodimer.

The catalysed reaction is Hydrolysis of Ala-|-Gly bond in repressor LexA.. Its function is as follows. Represses a number of genes involved in the response to DNA damage (SOS response), including recA and lexA. In the presence of single-stranded DNA, RecA interacts with LexA causing an autocatalytic cleavage which disrupts the DNA-binding part of LexA, leading to derepression of the SOS regulon and eventually DNA repair. This Shewanella halifaxensis (strain HAW-EB4) protein is LexA repressor.